We begin with the raw amino-acid sequence, 1752 residues long: Serine protease/ABC transporter B family protein tagA (1752 aa).

Positions Met-1–Ser-24 are cleaved as a signal peptide. An N-linked (GlcNAc...) asparagine glycan is attached at Asn-20. A Peptidase S8 domain is found at His-280–Ile-696. Active-site charge relay system residues include Asp-312 and His-352. Asn-400 and Asn-557 each carry an N-linked (GlcNAc...) asparagine glycan. Ser-625 acts as the Charge relay system in catalysis. Asn-653, Asn-785, and Asn-823 each carry an N-linked (GlcNAc...) asparagine glycan. The chain crosses the membrane as a helical span at residues Ile-909–Cys-929. Residues Asp-946–Asp-1032 form a disordered region. Residues Asn-962 to Asn-994 show a composition bias toward low complexity. An N-linked (GlcNAc...) asparagine glycan is attached at Asn-993. Positions Ser-995 to Leu-1004 are enriched in polar residues. Low complexity predominate over residues Gly-1013–Gln-1028. The next 6 helical transmembrane spans lie at Ile-1058–Leu-1078, Phe-1102–Leu-1122, Ile-1174–Ile-1194, Leu-1200–Ile-1220, Thr-1285–Val-1305, and Leu-1315–Leu-1335. The ABC transmembrane type-1 domain occupies Leu-1059–Ser-1341. In terms of domain architecture, ABC transporter spans Ile-1374–Ile-1610. Gly-1409 to Ser-1416 contributes to the ATP binding site. Residues Ile-1621–Gln-1686 form a disordered region. Residues Arg-1631–Thr-1642 show a composition bias toward basic and acidic residues. N-linked (GlcNAc...) asparagine glycosylation is found at Asn-1638, Asn-1670, and Asn-1694.

It in the C-terminal section; belongs to the ABC transporter superfamily. ABCB family. Multidrug resistance exporter (TC 3.A.1.201) subfamily. This sequence in the N-terminal section; belongs to the peptidase S8 family.

The protein localises to the membrane. Its function is as follows. Required for a general cell fate determination at the onset of development. Required for the specification of an initial population of prespore cells in which tagA is expressed. Required for normal SDF-2 signaling during spore encapsulation. In Dictyostelium discoideum (Social amoeba), this protein is Serine protease/ABC transporter B family protein tagA (tagA).